The chain runs to 163 residues: Mediator of RNA polymerase II transcription subunit 10 (163 aa).

Positions 57-79 are disordered; that stretch reads AAPDPSYVQSPPSRTGLSPADPP. Residues 63–72 are compositionally biased toward polar residues; the sequence is YVQSPPSRTG.

This sequence belongs to the Mediator complex subunit 10 family. As to quaternary structure, component of the Mediator complex.

Its subcellular location is the nucleus. Functionally, component of the Mediator complex, a coactivator involved in the regulated transcription of nearly all RNA polymerase II-dependent genes. Mediator functions as a bridge to convey information from gene-specific regulatory proteins to the basal RNA polymerase II transcription machinery. Mediator is recruited to promoters by direct interactions with regulatory proteins and serves as a scaffold for the assembly of a functional preinitiation complex with RNA polymerase II and the general transcription factors. This Coccidioides immitis (strain RS) (Valley fever fungus) protein is Mediator of RNA polymerase II transcription subunit 10 (NUT2).